The sequence spans 302 residues: 1D-myo-inositol 2-acetamido-2-deoxy-alpha-D-glucopyranoside deacetylase (302 aa).

Positions 12, 15, and 147 each coordinate Zn(2+).

Belongs to the MshB deacetylase family. It depends on Zn(2+) as a cofactor.

It catalyses the reaction 1D-myo-inositol 2-acetamido-2-deoxy-alpha-D-glucopyranoside + H2O = 1D-myo-inositol 2-amino-2-deoxy-alpha-D-glucopyranoside + acetate. Catalyzes the deacetylation of 1D-myo-inositol 2-acetamido-2-deoxy-alpha-D-glucopyranoside (GlcNAc-Ins) in the mycothiol biosynthesis pathway. This Thermobispora bispora (strain ATCC 19993 / DSM 43833 / CBS 139.67 / JCM 10125 / KCTC 9307 / NBRC 14880 / R51) protein is 1D-myo-inositol 2-acetamido-2-deoxy-alpha-D-glucopyranoside deacetylase.